A 271-amino-acid chain; its full sequence is ATP synthase subunit a (271 aa).

5 helical membrane-spanning segments follow: residues Phe38–Val58, Leu100–Leu120, Asp146–Ile166, Leu220–Pro240, and Ala242–Val262.

This sequence belongs to the ATPase A chain family. In terms of assembly, F-type ATPases have 2 components, CF(1) - the catalytic core - and CF(0) - the membrane proton channel. CF(1) has five subunits: alpha(3), beta(3), gamma(1), delta(1), epsilon(1). CF(0) has three main subunits: a(1), b(2) and c(9-12). The alpha and beta chains form an alternating ring which encloses part of the gamma chain. CF(1) is attached to CF(0) by a central stalk formed by the gamma and epsilon chains, while a peripheral stalk is formed by the delta and b chains.

Its subcellular location is the cell inner membrane. Key component of the proton channel; it plays a direct role in the translocation of protons across the membrane. This Salmonella choleraesuis (strain SC-B67) protein is ATP synthase subunit a.